The chain runs to 311 residues: MTRLIFMGTPQFSATVLQGLLEKPAYDILAVVTQPDRAVGRKKDITMTPVKKLALAHQLPVFQPEKLSGSQELADIMALGADGIVTAAFGQFLPTVLLDSVTFAVNVHASLLPKYRGGAPIHYAIINGDKEAGVTIMEMVKEMDAGDMISSASLPILDTDNVGTMFDKLAILGRDLLLKTLPDYLSGDLKPVPQDHSQATFSPNLSAEEERLDWSKPAREVFNHIRGMNPWPVAHTLLDGQRFKIYEAELAEGSGSAGQIIAKTKKALVVAAGEGALSLTLVQPAGKPKMPIVDFLNGIGRSLEVGDVLGE.

110 to 113 (SLLP) lines the (6S)-5,6,7,8-tetrahydrofolate pocket.

This sequence belongs to the Fmt family.

It catalyses the reaction L-methionyl-tRNA(fMet) + (6R)-10-formyltetrahydrofolate = N-formyl-L-methionyl-tRNA(fMet) + (6S)-5,6,7,8-tetrahydrofolate + H(+). Its function is as follows. Attaches a formyl group to the free amino group of methionyl-tRNA(fMet). The formyl group appears to play a dual role in the initiator identity of N-formylmethionyl-tRNA by promoting its recognition by IF2 and preventing the misappropriation of this tRNA by the elongation apparatus. This is Methionyl-tRNA formyltransferase from Streptococcus equi subsp. equi (strain 4047).